Reading from the N-terminus, the 312-residue chain is DDRGK domain-containing protein 1 (312 aa).

Residues 1-2 (ME) are Lumenal-facing. Residues 3–23 (LIILVGIATALLVVIITLYLL) form a helical membrane-spanning segment. Topologically, residues 24 to 312 (QKKNAAPETK…ISAGGEEASS (289 aa)) are cytoplasmic. The segment covering 59-79 (NQRNRLRQNAPAAPAGQVAPA) has biased composition (low complexity). Residues 59 to 162 (NQRNRLRQNA…RKHQEDLEAE (104 aa)) form a disordered region. The span at 110 to 162 (LDEKMGAKKRAKMEAKEQKRLQREQELHDREQRKVKEAKEEAERKHQEDLEAE) shows a compositional bias: basic and acidic residues.

The protein belongs to the DDRGK1 family. Interacts with Atg9; the interaction is transient.

It is found in the endoplasmic reticulum membrane. Its function is as follows. Substrate adapter for ufmylation, the covalent attachment of the ubiquitin-like modifier UFM1 to substrate proteins. Required for ufmylation of Atg9; protects the nervous system during aging, possibly by stabilizing Atg9 and supporting its function. The sequence is that of DDRGK domain-containing protein 1 from Drosophila yakuba (Fruit fly).